A 147-amino-acid polypeptide reads, in one-letter code: Bis(5'-adenosyl)-triphosphatase (147 aa).

In terms of domain architecture, HIT spans 2-109 (SFRFGQHLIK…LPRKAGDFHR (108 aa)). Substrate-binding positions include His-8, Asn-27, Gln-83, and 89-92 (GQTV). Residues 94–98 (HVHVH) carry the Histidine triad motif motif. Catalysis depends on His-96, which acts as the Tele-AMP-histidine intermediate. His-98 provides a ligand contact to substrate. Tyr-114 is subject to Phosphotyrosine; by SRC. The residue at position 145 (Tyr-145) is a Phosphotyrosine.

As to quaternary structure, homodimer. Interacts with UBE2I. Interacts with MDM2. Interacts with CTNNB1. Identified in a complex with CTNNB1 and LEF1. Post-translationally, phosphorylation at Tyr-114 by SRC is required for induction of apoptosis. As to expression, low levels expressed in all tissues tested. Phospho-FHIT observed in liver and kidney, but not in brain and lung. Phospho-FHIT undetected in all tested human tumor cell lines.

Its subcellular location is the cytoplasm. It localises to the mitochondrion. It is found in the nucleus. The catalysed reaction is P(1),P(3)-bis(5'-adenosyl) triphosphate + H2O = AMP + ADP + 2 H(+). It catalyses the reaction adenosine 5'-phosphosulfate + H2O = sulfate + AMP + 2 H(+). The enzyme catalyses adenosine 5'-phosphosulfate + NH4(+) = adenosine 5'-phosphoramidate + sulfate + 2 H(+). It carries out the reaction adenosine 5'-phosphoramidate + H2O = AMP + NH4(+). Its function is as follows. Possesses dinucleoside triphosphate hydrolase activity. Cleaves P(1)-P(3)-bis(5'-adenosyl) triphosphate (Ap3A) to yield AMP and ADP. Can also hydrolyze P(1)-P(4)-bis(5'-adenosyl) tetraphosphate (Ap4A), but has extremely low activity with ATP. Exhibits adenylylsulfatase activity, hydrolyzing adenosine 5'-phosphosulfate to yield AMP and sulfate. Exhibits adenosine 5'-monophosphoramidase activity, hydrolyzing purine nucleotide phosphoramidates with a single phosphate group such as adenosine 5'monophosphoramidate (AMP-NH2) to yield AMP and NH2. Exhibits adenylylsulfate-ammonia adenylyltransferase, catalyzing the ammonolysis of adenosine 5'-phosphosulfate resulting in the formation of adenosine 5'-phosphoramidate. Also catalyzes the ammonolysis of adenosine 5-phosphorofluoridate and diadenosine triphosphate. Modulates transcriptional activation by CTNNB1 and thereby contributes to regulate the expression of genes essential for cell proliferation and survival, such as CCND1 and BIRC5. Plays a role in the induction of apoptosis via SRC and AKT1 signaling pathways. Inhibits MDM2-mediated proteasomal degradation of p53/TP53 and thereby plays a role in p53/TP53-mediated apoptosis. Induction of apoptosis depends on the ability of FHIT to bind P(1)-P(3)-bis(5'-adenosyl) triphosphate or related compounds, but does not require its catalytic activity, it may in part come from the mitochondrial form, which sensitizes the low-affinity Ca(2+) transporters, enhancing mitochondrial calcium uptake. Functions as a tumor suppressor. The protein is Bis(5'-adenosyl)-triphosphatase (FHIT) of Homo sapiens (Human).